A 249-amino-acid chain; its full sequence is Probable transcriptional regulatory protein FN1661 (249 aa).

Positions 1-10 (MSGHSKWNNI) are enriched in polar residues. The disordered stretch occupies residues 1 to 20 (MSGHSKWNNIQHRKGAQDKK).

It belongs to the TACO1 family.

It localises to the cytoplasm. The chain is Probable transcriptional regulatory protein FN1661 from Fusobacterium nucleatum subsp. nucleatum (strain ATCC 25586 / DSM 15643 / BCRC 10681 / CIP 101130 / JCM 8532 / KCTC 2640 / LMG 13131 / VPI 4355).